A 342-amino-acid polypeptide reads, in one-letter code: Gibberellin cluster GA4 desaturase (342 aa).

The interval Pro127–Ala183 is disordered.

This sequence belongs to the asaB hydroxylase/desaturase family.

It participates in plant hormone biosynthesis; gibberellin biosynthesis. Its function is as follows. GA4 desaturase; part of the gene cluster that mediates the biosynthesis of gibberellins (GAs), diterpenoids that may provide a selective advantage during infection of the preferred host plant, rice. Gibberellins (GAs) are diterpenoids and are synthesized via the mevalonate pathway. Biosynthesis of the major metabolite GA3 (gibberellic acid) from geranylgeranyl diphosphate (GGPP) requires 13 steps. The GGPP produced by the geranylgeranyl diphosphate synthase GGS2 is converted to ent-kaurene via ent-copalyldiphosphate in a two-step cyclization reaction performed by the bifunctional ent-copalyl diphosphate synthase/ent-kaurene synthase enzyme (CPS/KS). Ent-Kaurene is metabolized to GAs by a series of oxidation reactions catalyzed by cytochrome P450 monooxygenases. Cytochrome P450 monooxygenase P450-4 is an ent-kaurene oxidase that catalyzes the three oxidation steps between ent-kaurene and ent-kaurenoic acid. The highly multifunctional cytochrome P450 monooxygenase P450-1 then catalyzes four steps involving oxidation at two carbon atoms, in the main pathway from ent-kaurenoic acid to GA14 via GA12-aldehyde as well as producing kaurenolides and fujenoic acids as by-products. The cytochrome P450 monooxygenase P450-2 then converts GA14 to GA4 by removal of C-20. GA4 is further converted to GA7 by the GA4 desaturase DES via 1,2-desaturation before cytochrome P450 monooxygenase P450-3, a 13-hydroxylase, hydroxylates GA7 to GA3, the final product of the GA-biosynthetic pathway. The polypeptide is Gibberellin cluster GA4 desaturase (Gibberella fujikuroi (strain CBS 195.34 / IMI 58289 / NRRL A-6831) (Bakanae and foot rot disease fungus)).